The sequence spans 76 residues: Small ribosomal subunit protein bS18 (76 aa).

It belongs to the bacterial ribosomal protein bS18 family. As to quaternary structure, part of the 30S ribosomal subunit. Forms a tight heterodimer with protein bS6.

Binds as a heterodimer with protein bS6 to the central domain of the 16S rRNA, where it helps stabilize the platform of the 30S subunit. In Neisseria gonorrhoeae (strain ATCC 700825 / FA 1090), this protein is Small ribosomal subunit protein bS18.